A 506-amino-acid polypeptide reads, in one-letter code: Glutamate--tRNA ligase (506 aa).

The 'HIGH' region motif lies at 9-19 (PSPTGFQHIGG). Residues 251–255 (KLSKR) carry the 'KMSKS' region motif. Lys254 serves as a coordination point for ATP.

This sequence belongs to the class-I aminoacyl-tRNA synthetase family. Glutamate--tRNA ligase type 1 subfamily. Monomer.

It localises to the cytoplasm. The enzyme catalyses tRNA(Glu) + L-glutamate + ATP = L-glutamyl-tRNA(Glu) + AMP + diphosphate. In terms of biological role, catalyzes the attachment of glutamate to tRNA(Glu) in a two-step reaction: glutamate is first activated by ATP to form Glu-AMP and then transferred to the acceptor end of tRNA(Glu). The polypeptide is Glutamate--tRNA ligase (Treponema denticola (strain ATCC 35405 / DSM 14222 / CIP 103919 / JCM 8153 / KCTC 15104)).